A 195-amino-acid polypeptide reads, in one-letter code: Proteasome subunit beta 1 (195 aa).

Positions 1-6 (MEELPA) are cleaved as a propeptide — removed in mature form; by autocatalysis. Thr-7 serves as the catalytic Nucleophile.

It belongs to the peptidase T1B family. The 20S proteasome core is composed of 14 alpha and 14 beta subunits that assemble into four stacked heptameric rings, resulting in a barrel-shaped structure. The two inner rings, each composed of seven catalytic beta subunits, are sandwiched by two outer rings, each composed of seven alpha subunits. The catalytic chamber with the active sites is on the inside of the barrel. Has a gated structure, the ends of the cylinder being occluded by the N-termini of the alpha-subunits. Is capped at one or both ends by the proteasome regulatory ATPase, PAN.

Its subcellular location is the cytoplasm. The enzyme catalyses Cleavage of peptide bonds with very broad specificity.. With respect to regulation, the formation of the proteasomal ATPase PAN-20S proteasome complex, via the docking of the C-termini of PAN into the intersubunit pockets in the alpha-rings, triggers opening of the gate for substrate entry. Interconversion between the open-gate and close-gate conformations leads to a dynamic regulation of the 20S proteasome proteolysis activity. Component of the proteasome core, a large protease complex with broad specificity involved in protein degradation. In Sulfolobus acidocaldarius (strain ATCC 33909 / DSM 639 / JCM 8929 / NBRC 15157 / NCIMB 11770), this protein is Proteasome subunit beta 1.